The following is an 857-amino-acid chain: Protein argonaute-1 (857 aa).

Positions 227–346 (PVIEFMCEVL…LPLEVCNIVA (120 aa)) constitute a PAZ domain. Interaction with guide RNA stretches follow at residues 309–314 (YFKQKY) and 522–564 (GKTP…LCLK). Positions 515 to 816 (LIIVILPGKT…VAFRARYHLV (302 aa)) constitute a Piwi domain. The tract at residues 670-675 (PEGQLP) is impairs access of bound RNA to the active site. 3 interaction with guide RNA regions span residues 708–712 (RHHTR), 751–759 (HAGIQGTSR), and 788–813 (YVRC…RARY).

It belongs to the argonaute family. Ago subfamily. As to quaternary structure, interacts with DDB1, DDX5, DDX6, DHX30, DHX36, DDX47, DICER1, AGO2, ELAVL1, HNRNPF, IGF2BP1, ILF3, IMP8, MATR3, MOV10, PABPC1, PRMT5, RBM4, SART3, TNRC6B, UPF1 and YBX1. Associates with polysomes and messenger ribonucleoproteins (mNRPs). Interacts with LIMD1, WTIP and AJUBA. Interacts with APOBEC3F, APOBEC3G and APOBEC3H. Post-translationally, ubiquitinated on surface-exposed lysines by a SCF-like E3 ubiquitin-protein ligase complex containing ZSWIM8 during target-directed microRNA degradation (TDMD), a process that mediates degradation of microRNAs (miRNAs). Ubiquitination by the SCF-like E3 ubiquitin-protein ligase complex containing ZSWIM8 leads to its subsequent degradation, thereby exposing miRNAs for degradation. ZSWIM8 recognizes and binds AGO1 when it is engaged with a TDMD target.

Its subcellular location is the cytoplasm. It localises to the P-body. Its function is as follows. Required for RNA-mediated gene silencing (RNAi). Binds to short RNAs such as microRNAs (miRNAs) or short interfering RNAs (siRNAs), and represses the translation of mRNAs which are complementary to them. Lacks endonuclease activity and does not appear to cleave target mRNAs. Also required for transcriptional gene silencing (TGS) of promoter regions which are complementary to bound short antigene RNAs (agRNAs). The sequence is that of Protein argonaute-1 (AGO1) from Homo sapiens (Human).